The following is a 482-amino-acid chain: tRNA sulfurtransferase (482 aa).

The region spanning 61–165 (PAIRDALTRI…NDRLLLVKGR (105 aa)) is the THUMP domain. Residues 183 to 184 (LI), K265, G287, and Q296 each bind ATP. Residues C344 and C456 are joined by a disulfide bond. Residues 404–482 (FGANDAILDI…GFSNVKVYRP (79 aa)) enclose the Rhodanese domain. C456 serves as the catalytic Cysteine persulfide intermediate.

The protein belongs to the ThiI family.

The protein resides in the cytoplasm. It carries out the reaction [ThiI sulfur-carrier protein]-S-sulfanyl-L-cysteine + a uridine in tRNA + 2 reduced [2Fe-2S]-[ferredoxin] + ATP + H(+) = [ThiI sulfur-carrier protein]-L-cysteine + a 4-thiouridine in tRNA + 2 oxidized [2Fe-2S]-[ferredoxin] + AMP + diphosphate. It catalyses the reaction [ThiS sulfur-carrier protein]-C-terminal Gly-Gly-AMP + S-sulfanyl-L-cysteinyl-[cysteine desulfurase] + AH2 = [ThiS sulfur-carrier protein]-C-terminal-Gly-aminoethanethioate + L-cysteinyl-[cysteine desulfurase] + A + AMP + 2 H(+). The protein operates within cofactor biosynthesis; thiamine diphosphate biosynthesis. In terms of biological role, catalyzes the ATP-dependent transfer of a sulfur to tRNA to produce 4-thiouridine in position 8 of tRNAs, which functions as a near-UV photosensor. Also catalyzes the transfer of sulfur to the sulfur carrier protein ThiS, forming ThiS-thiocarboxylate. This is a step in the synthesis of thiazole, in the thiamine biosynthesis pathway. The sulfur is donated as persulfide by IscS. This chain is tRNA sulfurtransferase, found in Klebsiella pneumoniae subsp. pneumoniae (strain ATCC 700721 / MGH 78578).